Consider the following 121-residue polypeptide: Succinate dehydrogenase assembly factor 3, mitochondrial (121 aa).

The transit peptide at 1-35 (MRPSLVRLVRPRRPERKTSPILPPLKLYKALLRAH) directs the protein to the mitochondrion.

The protein belongs to the complex I LYR family. SDHAF3 subfamily. In terms of assembly, interacts with the iron-sulfur protein subunit within the SDH catalytic dimer.

It is found in the mitochondrion matrix. Its function is as follows. Plays an essential role in the assembly of succinate dehydrogenase (SDH), an enzyme complex (also referred to as respiratory complex II) that is a component of both the tricarboxylic acid (TCA) cycle and the mitochondrial electron transport chain, and which couples the oxidation of succinate to fumarate with the reduction of ubiquinone (coenzyme Q) to ubiquinol. Promotes maturation of the iron-sulfur protein subunit of the SDH catalytic dimer, protecting it from the deleterious effects of oxidants. May act together with SDHAF1. The sequence is that of Succinate dehydrogenase assembly factor 3, mitochondrial from Debaryomyces hansenii (strain ATCC 36239 / CBS 767 / BCRC 21394 / JCM 1990 / NBRC 0083 / IGC 2968) (Yeast).